The primary structure comprises 157 residues: tRNA (cytidine(34)-2'-O)-methyltransferase (157 aa).

S-adenosyl-L-methionine contacts are provided by Leu78, Gly100, Ile122, and Ser130.

It belongs to the class IV-like SAM-binding methyltransferase superfamily. RNA methyltransferase TrmH family. TrmL subfamily. In terms of assembly, homodimer.

It is found in the cytoplasm. The catalysed reaction is cytidine(34) in tRNA + S-adenosyl-L-methionine = 2'-O-methylcytidine(34) in tRNA + S-adenosyl-L-homocysteine + H(+). It carries out the reaction 5-carboxymethylaminomethyluridine(34) in tRNA(Leu) + S-adenosyl-L-methionine = 5-carboxymethylaminomethyl-2'-O-methyluridine(34) in tRNA(Leu) + S-adenosyl-L-homocysteine + H(+). Its function is as follows. Methylates the ribose at the nucleotide 34 wobble position in the two leucyl isoacceptors tRNA(Leu)(CmAA) and tRNA(Leu)(cmnm5UmAA). Catalyzes the methyl transfer from S-adenosyl-L-methionine to the 2'-OH of the wobble nucleotide. The polypeptide is tRNA (cytidine(34)-2'-O)-methyltransferase (Escherichia coli O6:H1 (strain CFT073 / ATCC 700928 / UPEC)).